Reading from the N-terminus, the 383-residue chain is tRNA-specific 2-thiouridylase MnmA (383 aa).

Residues 29–36 and Met-55 contribute to the ATP site; that span reads GMSGGVDS. Positions 115 to 117 are interaction with target base in tRNA; the sequence is NPD. Residue Cys-120 is the Nucleophile of the active site. An intrachain disulfide couples Cys-120 to Cys-217. Gly-145 is a binding site for ATP. The interval 167-169 is interaction with tRNA; it reads KDQ. Cys-217 acts as the Cysteine persulfide intermediate in catalysis. The tract at residues 329–330 is interaction with tRNA; that stretch reads RY.

This sequence belongs to the MnmA/TRMU family.

The protein localises to the cytoplasm. The enzyme catalyses S-sulfanyl-L-cysteinyl-[protein] + uridine(34) in tRNA + AH2 + ATP = 2-thiouridine(34) in tRNA + L-cysteinyl-[protein] + A + AMP + diphosphate + H(+). Its function is as follows. Catalyzes the 2-thiolation of uridine at the wobble position (U34) of tRNA, leading to the formation of s(2)U34. The sequence is that of tRNA-specific 2-thiouridylase MnmA from Histophilus somni (strain 129Pt) (Haemophilus somnus).